Consider the following 215-residue polypeptide: LysM and putative peptidoglycan-binding domain-containing protein 1 (215 aa).

In terms of domain architecture, LysM spans 37 to 81 (LEHQVQPGDTLQGLALRYGVSMEQIKRANRLYTNDSIFLKKSLYI). Composition is skewed to polar residues over residues 86–103 (GQSD…SETE) and 173–189 (GNRT…QQRS). Disordered stretches follow at residues 86–133 (GQSD…PVDF) and 148–203 (AVKK…TRAS).

This Xenopus laevis (African clawed frog) protein is LysM and putative peptidoglycan-binding domain-containing protein 1 (lysmd1).